Reading from the N-terminus, the 406-residue chain is Ribonuclease D (406 aa).

The 168-residue stretch at 26-193 (LITQTTDLEI…VYLLLKKQLE (168 aa)) folds into the 3'-5' exonuclease domain. The region spanning 231-312 (KPRELAVLQK…HEGLEVDLAT (82 aa)) is the HRDC domain.

Belongs to the RNase D family. Requires a divalent metal cation as cofactor.

It is found in the cytoplasm. The enzyme catalyses Exonucleolytic cleavage that removes extra residues from the 3'-terminus of tRNA to produce 5'-mononucleotides.. Functionally, exonuclease involved in the 3' processing of various precursor tRNAs. Initiates hydrolysis at the 3'-terminus of an RNA molecule and releases 5'-mononucleotides. The polypeptide is Ribonuclease D (Bartonella henselae (strain ATCC 49882 / DSM 28221 / CCUG 30454 / Houston 1) (Rochalimaea henselae)).